Consider the following 312-residue polypeptide: Olfactory receptor 2M7 (312 aa).

The Extracellular portion of the chain corresponds to 1–25 (MAWENQTFNSDFLLLGIFNHSPTHT). Asn-5 carries N-linked (GlcNAc...) asparagine glycosylation. Residues 26-49 (FLFFLVLAIFSVAFMGNSIMVLLI) form a helical membrane-spanning segment. Topologically, residues 50–57 (YLDTQLHT) are cytoplasmic. Residues 58–79 (PMYFLLSQLSLMDLMLICTTVP) form a helical membrane-spanning segment. Over 80-100 (KMAFNYLSGSKSISMAGCATQ) the chain is Extracellular. Cysteines 97 and 189 form a disulfide. The helical transmembrane segment at 101 to 120 (IFFYISLLGSECFLLAVMSY) threads the bilayer. Residues 121 to 139 (DRYTAICHPLRYTNLMRPK) lie on the Cytoplasmic side of the membrane. The helical transmembrane segment at 140–158 (ICGLMTAFSWILGSTDGII) threads the bilayer. The Extracellular portion of the chain corresponds to 159-195 (DAVATFSFSYCGSREIAHFCCDFPSLLILSCNDTSIF). A helical transmembrane segment spans residues 196 to 219 (EEVIFICCIVMLVFPVAIIITSYA). The Cytoplasmic segment spans residues 220–236 (RVILAVIHMGSGEGRRK). A helical membrane pass occupies residues 237-259 (AFTTCSSHLMVVGMYYGAGLFMC). The Extracellular segment spans residues 260-272 (IQPTSHHSPMQDK). A helical transmembrane segment spans residues 273-292 (MVSVFYTIVTPMLNPLIYSL). Topologically, residues 293–311 (RNKEVTRALMKILGKGKSG) are cytoplasmic.

Belongs to the G-protein coupled receptor 1 family.

The protein resides in the cell membrane. In terms of biological role, odorant receptor. The sequence is that of Olfactory receptor 2M7 (OR2M7) from Homo sapiens (Human).